Reading from the N-terminus, the 846-residue chain is Leucine--tRNA ligase (846 aa).

A 'HIGH' region motif is present at residues 47-57 (PYPSGRIHMGH). A 'KMSKS' region motif is present at residues 621–625 (KMSKS). K624 is an ATP binding site.

It belongs to the class-I aminoacyl-tRNA synthetase family.

The protein localises to the cytoplasm. It carries out the reaction tRNA(Leu) + L-leucine + ATP = L-leucyl-tRNA(Leu) + AMP + diphosphate. The sequence is that of Leucine--tRNA ligase from Zymomonas mobilis subsp. mobilis (strain ATCC 31821 / ZM4 / CP4).